The chain runs to 846 residues: Sucrose synthase 6 (846 aa).

The tract at residues 276–755 (CVFTVVIFSI…GLQRIYECYT (480 aa)) is GT-B glycosyltransferase.

The protein belongs to the glycosyltransferase 1 family. Plant sucrose synthase subfamily.

It carries out the reaction an NDP-alpha-D-glucose + D-fructose = a ribonucleoside 5'-diphosphate + sucrose + H(+). Its function is as follows. Sucrose-cleaving enzyme that provides UDP-glucose and fructose for various metabolic pathways. The chain is Sucrose synthase 6 (SUS6) from Oryza sativa subsp. japonica (Rice).